The following is a 149-amino-acid chain: Large ribosomal subunit protein bL20m (149 aa).

The transit peptide at 1 to 9 directs the protein to the mitochondrion; the sequence is MVFLSAPLW.

The protein belongs to the bacterial ribosomal protein bL20 family. Component of the mitochondrial ribosome large subunit (39S) which comprises a 16S rRNA and about 50 distinct proteins. Interacts with OXA1L.

It localises to the mitochondrion. The polypeptide is Large ribosomal subunit protein bL20m (MRPL20) (Bos taurus (Bovine)).